We begin with the raw amino-acid sequence, 155 residues long: uncharacterized protein (155 aa).

The tract at residues 135–155 (SQANSKNDSNSKDDLPNPFSV) is disordered.

This is an uncharacterized protein from Acidianus convivator (ATV).